The sequence spans 377 residues: Interferon gamma receptor 1 (377 aa).

A signal peptide spans 1–23 (MRTQIYISVTVLILLLKKSDLEA). Over 24 to 235 (VRVPSPESVS…IRRYTPFTVY (212 aa)) the chain is Extracellular. One can recognise a Fibronectin type-III domain in the interval 26–117 (VPSPESVSVQ…DFFIFSFNEN (92 aa)). N-linked (GlcNAc...) asparagine glycosylation is found at Asn-78 and Asn-186. The chain crosses the membrane as a helical span at residues 236–256 (LYPVLGVTLTLLFITGIIILL). Residues 257–377 (EKKCNSEMKK…TVDSYGPRLL (121 aa)) lie on the Cytoplasmic side of the membrane. The disordered stretch occupies residues 326-377 (VYSEDKNSYGPNDLVEDEQSDLSDFYDCPHAPKQKREMSPGDTVDSYGPRLL).

This sequence belongs to the type II cytokine receptor family. As to expression, highly expressed in spleen. Also detected in brain, kidney, gill, intestine and heart. Expressed at very low levels in muscle. In immune cell populations, shows highest expression in monocytes, and slightly lower expression in peripheral blood leukocytes, splenocytes, neutrophils and mature macrophages.

It is found in the cell membrane. Functionally, receptor which shows binding specificity for the cytokine ifng1r (interferon gamma-related). This is Interferon gamma receptor 1 from Carassius auratus (Goldfish).